The following is a 434-amino-acid chain: Tryptophan--tRNA ligase (434 aa).

Residues 14-16 (TTS) and 22-23 (GN) contribute to the ATP site. Positions 15–23 (TSGTPHLGN) match the 'HIGH' region motif. Aspartate 147 provides a ligand contact to L-tryptophan. Residues 159-161 (GRD), leucine 199, and 206-210 (KMSKS) contribute to the ATP site. A 'KMSKS' region motif is present at residues 206 to 210 (KMSKS).

Belongs to the class-I aminoacyl-tRNA synthetase family. In terms of assembly, homodimer.

The protein resides in the cytoplasm. It carries out the reaction tRNA(Trp) + L-tryptophan + ATP = L-tryptophyl-tRNA(Trp) + AMP + diphosphate + H(+). Functionally, catalyzes the attachment of tryptophan to tRNA(Trp). This Xylella fastidiosa (strain 9a5c) protein is Tryptophan--tRNA ligase.